The chain runs to 473 residues: Cysteine--tRNA ligase (473 aa).

Cysteine 27 lines the Zn(2+) pocket. A 'HIGH' region motif is present at residues 29 to 39 (ITPYDHMHVGH). Residues cysteine 213, histidine 238, and glutamate 242 each contribute to the Zn(2+) site. The short motif at 271–275 (KMSKS) is the 'KMSKS' region element. ATP is bound at residue lysine 274.

Belongs to the class-I aminoacyl-tRNA synthetase family. The cofactor is Zn(2+).

The protein resides in the cytoplasm. It carries out the reaction tRNA(Cys) + L-cysteine + ATP = L-cysteinyl-tRNA(Cys) + AMP + diphosphate. This is Cysteine--tRNA ligase from Pyrobaculum islandicum (strain DSM 4184 / JCM 9189 / GEO3).